Consider the following 423-residue polypeptide: Adenylosuccinate synthetase (423 aa).

Residues 12–18 and 40–42 each bind GTP; these read GDEGKGK and GHT. The Proton acceptor role is filled by aspartate 13. Mg(2+)-binding residues include aspartate 13 and glycine 40. Residues 13–16, 38–41, threonine 129, arginine 143, glutamine 224, threonine 239, and arginine 303 each bind IMP; these read DEGK and NAGH. The Proton donor role is filled by histidine 41. Residue 299-305 participates in substrate binding; it reads SVTGRQR. GTP is bound by residues arginine 305, 331-333, and 412-414; these read KGD and SVG.

Belongs to the adenylosuccinate synthetase family. Homodimer. Requires Mg(2+) as cofactor.

It is found in the cytoplasm. The catalysed reaction is IMP + L-aspartate + GTP = N(6)-(1,2-dicarboxyethyl)-AMP + GDP + phosphate + 2 H(+). It participates in purine metabolism; AMP biosynthesis via de novo pathway; AMP from IMP: step 1/2. Functionally, plays an important role in the de novo pathway of purine nucleotide biosynthesis. Catalyzes the first committed step in the biosynthesis of AMP from IMP. The chain is Adenylosuccinate synthetase from Flavobacterium johnsoniae (strain ATCC 17061 / DSM 2064 / JCM 8514 / BCRC 14874 / CCUG 350202 / NBRC 14942 / NCIMB 11054 / UW101) (Cytophaga johnsonae).